The following is a 322-amino-acid chain: MSGEVPPNINIKEPRWDQSTFIGRASHFFTVTDPKNILLTNEQLENARKVVHDYRQGIVPAGLTENELWRAKYAYDSAFHPDTGEKMTLIGRMSAQVPMNMTITGCMMTFYRTTPAVLFWQWINQSFNAVVNYTNRSGDAPLTVNELGTAYVSATTGAVATALGLNALTKHVSPLIGRFVPFAAVAAANCINIPLMRQRELKVGIPVTDENGTRLGESTNAAKQAITQVVISRILMAAPGMAIPPFIMNTLEKKAFLKRFPWMSAPIQVTLVGFCLVFATPLCCALFPQKSSMSVTSLEDDLQASIQKSHPELRRVYFNKGL.

An N-acetylserine modification is found at Ser-2. At Ser-2–Thr-102 the chain is on the mitochondrial matrix side. A helical transmembrane segment spans residues Ile-103–Trp-120. The Mitochondrial intermembrane segment spans residues Gln-121–Glu-146. A helical transmembrane segment spans residues Leu-147–Ala-167. The Mitochondrial matrix portion of the chain corresponds to Leu-168–Pro-174. A helical membrane pass occupies residues Leu-175–Leu-195. At Met-196–Gln-228 the chain is on the mitochondrial intermembrane side. The helical transmembrane segment at Val-229 to Asn-249 threads the bilayer. Topologically, residues Thr-250–Pro-266 are mitochondrial matrix. A helical membrane pass occupies residues Ile-267–Phe-287. The Mitochondrial intermembrane segment spans residues Pro-288–Leu-322.

This sequence belongs to the sideroflexin family.

The protein localises to the mitochondrion inner membrane. It carries out the reaction L-serine(in) = L-serine(out). The enzyme catalyses L-alanine(in) = L-alanine(out). The catalysed reaction is L-cysteine(in) = L-cysteine(out). Amino acid transporter importing serine, an essential substrate of the mitochondrial branch of the one-carbon pathway, into mitochondria. Mitochondrial serine is then converted to glycine and formate, which exits to the cytosol where it is used to generate the charged folates that serve as one-carbon donors. May also transport other amino acids including alanine and cysteine. This is Sideroflexin-1 (Sfxn1) from Rattus norvegicus (Rat).